A 148-amino-acid chain; its full sequence is Hemoglobin subunit beta-4 (148 aa).

A Globin domain is found at 3 to 148 (DWTDPERSAI…VVSALGRQYH (146 aa)). Heme b contacts are provided by H64 and H93.

The protein belongs to the globin family. In terms of assembly, heterotetramer of two alpha chains and two beta chains. As to expression, red blood cells.

Functionally, involved in oxygen transport from gills to the various peripheral tissues. The chain is Hemoglobin subunit beta-4 (hbb4) from Oncorhynchus mykiss (Rainbow trout).